The following is a 111-amino-acid chain: Aspartate 1-decarboxylase (111 aa).

Serine 25 serves as the catalytic Schiff-base intermediate with substrate; via pyruvic acid. Serine 25 is modified (pyruvic acid (Ser)). Threonine 57 contacts substrate. Catalysis depends on tyrosine 58, which acts as the Proton donor. Residue 73 to 75 (GPA) participates in substrate binding.

This sequence belongs to the PanD family. Heterooctamer of four alpha and four beta subunits. Pyruvate serves as cofactor. In terms of processing, is synthesized initially as an inactive proenzyme, which is activated by self-cleavage at a specific serine bond to produce a beta-subunit with a hydroxyl group at its C-terminus and an alpha-subunit with a pyruvoyl group at its N-terminus.

It localises to the cytoplasm. The enzyme catalyses L-aspartate + H(+) = beta-alanine + CO2. Its pathway is cofactor biosynthesis; (R)-pantothenate biosynthesis; beta-alanine from L-aspartate: step 1/1. Functionally, catalyzes the pyruvoyl-dependent decarboxylation of aspartate to produce beta-alanine. The sequence is that of Aspartate 1-decarboxylase from Francisella tularensis subsp. tularensis (strain FSC 198).